We begin with the raw amino-acid sequence, 141 residues long: Protein E6 (141 aa).

2 zinc fingers span residues cysteine 27–cysteine 64 and cysteine 101–cysteine 137.

The protein belongs to the papillomaviridae E6 protein family. In terms of assembly, forms homodimers. Interacts with ubiquitin-protein ligase UBE3A/E6-AP; this interaction stimulates UBE3A ubiquitin activity. Interacts with host BAK1.

The protein resides in the host cytoplasm. It localises to the host nucleus. Plays a major role in the induction and maintenance of cellular transformation. E6 associates with host UBE3A/E6-AP ubiquitin-protein ligase and modulates its activity. Protects host keratinocytes from apoptosis by mediating the degradation of host BAK1. May also inhibit host immune response. The protein is Protein E6 of Human papillomavirus 15.